A 174-amino-acid chain; its full sequence is Crossover junction endodeoxyribonuclease RuvC (174 aa).

Residues aspartate 8, glutamate 67, and aspartate 139 contribute to the active site. 3 residues coordinate Mg(2+): aspartate 8, glutamate 67, and aspartate 139.

It belongs to the RuvC family. As to quaternary structure, homodimer which binds Holliday junction (HJ) DNA. The HJ becomes 2-fold symmetrical on binding to RuvC with unstacked arms; it has a different conformation from HJ DNA in complex with RuvA. In the full resolvosome a probable DNA-RuvA(4)-RuvB(12)-RuvC(2) complex forms which resolves the HJ. The cofactor is Mg(2+).

The protein localises to the cytoplasm. The catalysed reaction is Endonucleolytic cleavage at a junction such as a reciprocal single-stranded crossover between two homologous DNA duplexes (Holliday junction).. Functionally, the RuvA-RuvB-RuvC complex processes Holliday junction (HJ) DNA during genetic recombination and DNA repair. Endonuclease that resolves HJ intermediates. Cleaves cruciform DNA by making single-stranded nicks across the HJ at symmetrical positions within the homologous arms, yielding a 5'-phosphate and a 3'-hydroxyl group; requires a central core of homology in the junction. The consensus cleavage sequence is 5'-(A/T)TT(C/G)-3'. Cleavage occurs on the 3'-side of the TT dinucleotide at the point of strand exchange. HJ branch migration catalyzed by RuvA-RuvB allows RuvC to scan DNA until it finds its consensus sequence, where it cleaves and resolves the cruciform DNA. This chain is Crossover junction endodeoxyribonuclease RuvC, found in Pseudomonas syringae pv. syringae (strain B728a).